A 723-amino-acid chain; its full sequence is Catalase-peroxidase (723 aa).

Positions 96–224 (WHAAGTYRIQ…LAAVQMGLIY (129 aa)) form a cross-link, tryptophyl-tyrosyl-methioninium (Trp-Tyr) (with M-250). Residue H97 is the Proton acceptor of the active site. Residues 224–250 (YVNPEGVNSQPDPIKTGEQVRVTFARM) constitute a cross-link (tryptophyl-tyrosyl-methioninium (Tyr-Met) (with W-96)). H265 serves as a coordination point for heme b.

It belongs to the peroxidase family. Peroxidase/catalase subfamily. As to quaternary structure, homodimer or homotetramer. Requires heme b as cofactor. In terms of processing, formation of the three residue Trp-Tyr-Met cross-link is important for the catalase, but not the peroxidase activity of the enzyme.

It catalyses the reaction H2O2 + AH2 = A + 2 H2O. It carries out the reaction 2 H2O2 = O2 + 2 H2O. Its function is as follows. Bifunctional enzyme with both catalase and broad-spectrum peroxidase activity. The protein is Catalase-peroxidase of Marinobacter nauticus (strain ATCC 700491 / DSM 11845 / VT8) (Marinobacter aquaeolei).